A 454-amino-acid chain; its full sequence is Bifunctional protein GlmU (454 aa).

Positions 1-225 are pyrophosphorylase; sequence MNIVILAAGM…LWETLGVNSK (225 aa). UDP-N-acetyl-alpha-D-glucosamine is bound by residues 6–9, K20, Q71, 76–77, 98–100, G135, E150, N165, and N223; these read LAAG, GT, and YGD. Residue D100 participates in Mg(2+) binding. N223 is a Mg(2+) binding site. Residues 226–246 are linker; the sequence is VQLAEIERIHQRNIAQRLLEA. The tract at residues 247–454 is N-acetyltransferase; that stretch reads GVTLLDPARI…WQRPVKQPKK (208 aa). UDP-N-acetyl-alpha-D-glucosamine-binding residues include R329 and K347. H359 (proton acceptor) is an active-site residue. Positions 362 and 373 each coordinate UDP-N-acetyl-alpha-D-glucosamine. Acetyl-CoA is bound by residues A376, 382-383, S401, A419, and R436; that span reads NY.

This sequence in the N-terminal section; belongs to the N-acetylglucosamine-1-phosphate uridyltransferase family. In the C-terminal section; belongs to the transferase hexapeptide repeat family. In terms of assembly, homotrimer. Mg(2+) is required as a cofactor.

The protein resides in the cytoplasm. It catalyses the reaction alpha-D-glucosamine 1-phosphate + acetyl-CoA = N-acetyl-alpha-D-glucosamine 1-phosphate + CoA + H(+). The enzyme catalyses N-acetyl-alpha-D-glucosamine 1-phosphate + UTP + H(+) = UDP-N-acetyl-alpha-D-glucosamine + diphosphate. It participates in nucleotide-sugar biosynthesis; UDP-N-acetyl-alpha-D-glucosamine biosynthesis; N-acetyl-alpha-D-glucosamine 1-phosphate from alpha-D-glucosamine 6-phosphate (route II): step 2/2. The protein operates within nucleotide-sugar biosynthesis; UDP-N-acetyl-alpha-D-glucosamine biosynthesis; UDP-N-acetyl-alpha-D-glucosamine from N-acetyl-alpha-D-glucosamine 1-phosphate: step 1/1. It functions in the pathway bacterial outer membrane biogenesis; LPS lipid A biosynthesis. Its function is as follows. Catalyzes the last two sequential reactions in the de novo biosynthetic pathway for UDP-N-acetylglucosamine (UDP-GlcNAc). The C-terminal domain catalyzes the transfer of acetyl group from acetyl coenzyme A to glucosamine-1-phosphate (GlcN-1-P) to produce N-acetylglucosamine-1-phosphate (GlcNAc-1-P), which is converted into UDP-GlcNAc by the transfer of uridine 5-monophosphate (from uridine 5-triphosphate), a reaction catalyzed by the N-terminal domain. The polypeptide is Bifunctional protein GlmU (Cupriavidus metallidurans (strain ATCC 43123 / DSM 2839 / NBRC 102507 / CH34) (Ralstonia metallidurans)).